The sequence spans 173 residues: NADH-quinone oxidoreductase subunit B 2 (173 aa).

The [4Fe-4S] cluster site is built by C42, C43, C107, and C137.

This sequence belongs to the complex I 20 kDa subunit family. NDH-1 is composed of 14 different subunits. Subunits NuoB, C, D, E, F, and G constitute the peripheral sector of the complex. Requires [4Fe-4S] cluster as cofactor.

The protein localises to the cell inner membrane. The catalysed reaction is a quinone + NADH + 5 H(+)(in) = a quinol + NAD(+) + 4 H(+)(out). Functionally, NDH-1 shuttles electrons from NADH, via FMN and iron-sulfur (Fe-S) centers, to quinones in the respiratory chain. Couples the redox reaction to proton translocation (for every two electrons transferred, four hydrogen ions are translocated across the cytoplasmic membrane), and thus conserves the redox energy in a proton gradient. The protein is NADH-quinone oxidoreductase subunit B 2 of Anaeromyxobacter dehalogenans (strain 2CP-C).